We begin with the raw amino-acid sequence, 298 residues long: Olfactory receptor 52Z1P (298 aa).

The Extracellular portion of the chain corresponds to M1–S14. The chain crosses the membrane as a helical span at residues I15–I35. Topologically, residues M36–E43 are cytoplasmic. A helical transmembrane segment spans residues P44–A64. Topologically, residues P65–S85 are extracellular. A disulfide bridge connects residues C83 and C164. A helical transmembrane segment spans residues Q86–F106. Topologically, residues D107–K128 are cytoplasmic. A helical transmembrane segment spans residues I129–Y149. Topologically, residues R150–N178 are extracellular. Residues I179 to I199 form a helical membrane-spanning segment. The Cytoplasmic portion of the chain corresponds to S200 to T223. Residues C224–A244 form a helical membrane-spanning segment. The Extracellular portion of the chain corresponds to H245 to H257. A helical membrane pass occupies residues I258–V278. Residues K279–C298 lie on the Cytoplasmic side of the membrane.

This sequence belongs to the G-protein coupled receptor 1 family.

Its subcellular location is the cell membrane. Functionally, odorant receptor. In Homo sapiens (Human), this protein is Olfactory receptor 52Z1P.